Here is a 996-residue protein sequence, read N- to C-terminus: MEGRGWPWKRKSSDKATTEKPVVGIESTPVCSLSYLASLENQEKCKNTNYVQITMDSYTHMSRMEDQVKLFEVQVKDLKEKLTLAHSEINTKESLILQHAKVAEEAVSGWEKADAETLALKRQLESVTLLKLTAEDRASHLDDALKECTRQIRIVKEESDKKLQDVILAKTSQWDKIKAELEGKIDELSEGLHRAASDNAALTRSLQERSEMIVRISEERSKAEADVEKLKTNLQLAEKEISYLKYDLHVASKEVEIRNEEKNMSLKSADIANKQHLEGVKKIAKLEAECHRLRGLLRKKLPGPAAMAQMKLEVEGLGHEFTDPRAQRNMSQNHNAHIAKAEISTDHKLEECKRENVYLTRRTLEMEEEIQTLKEHLSARNNELQVSRNVCAKTLGKLKILEGQMHMFNNDKNAPKSNSRNLSESLSSGHDHHYPPSVTSVSEDGFDEEGSSSECGPATSLDSHKVRKVSVNGSSKPRSSSRLELMDDFLEIEKLVGSDPDGANSASKSSNSVCSRRSVEKQSSSKSSEPDEDTTTLDQLLMVLRSRINRIFESQEGISIDKIVEAARFSIQEMQGSSTKRMSSHLFEVTDETLEKHVDIQNSEKEQKNTKQQDLEAAVANIHHFIKSTTKEATQLQDMNGNGQLRESLEDFSSSVSKYPTGESSLSDVMLELSRISVLASNLNNGALTLKPHSKEIPVTESNDKVTLLFEESDSNPLGDTFAKTDHCVDNLINGDDSSCKSLLKEVEQLKLEKENIAVELSRCLQNLESTKAWLEEKEQLISKLKSQLTSSEDLQSLAETQLKCVTESYKSLDLHAKELEAKVKSLEEETKRLEMAFTTEKHGHEETLAKCRDLQEKMQRNETCENCSSSKLQPNQEKDIVSATEKLAACQETIHLLSQQLQSLQPQSNHILKSRSPEKKFQQHKASEVTPNSALDDLPHVHIIQPSRSVKHTVNPTVHAIMKSSSVSSSSKEDNEKHTRGLGRFFSSKSKNSAR.

Residues 1-20 (MEGRGWPWKRKSSDKATTEK) form a disordered region. Coiled-coil stretches lie at residues 59 to 94 (THMS…TKES), 133 to 248 (TAED…KYDL), 280 to 301 (VKKI…RKKL), and 359 to 387 (LTRR…LQVS). 2 disordered regions span residues 409–482 (NNDK…SSSR) and 496–534 (VGSD…DEDT). Residues 417–428 (SNSRNLSESLSS) show a composition bias toward low complexity. Over residues 471–482 (VNGSSKPRSSSR) the composition is skewed to polar residues. Residues 503–527 (ANSASKSSNSVCSRRSVEKQSSSKS) show a composition bias toward low complexity. 3 coiled-coil regions span residues 601 to 622 (QNSE…VANI), 737 to 841 (DSSC…FTTE), and 876 to 906 (NQEK…QSLQ). The interval 962–996 (IMKSSSVSSSSKEDNEKHTRGLGRFFSSKSKNSAR) is disordered.

Belongs to the FPP family. As to quaternary structure, interacts with WPP/MAF proteins.

This chain is Filament-like plant protein 5 (FPP5), found in Arabidopsis thaliana (Mouse-ear cress).